Reading from the N-terminus, the 393-residue chain is MTTAWVDASAGASGDMLLGALVGAGVPVAVLQAAVDAVAPEPVTLRVEHVRRGGLAATRCHVEVTDTARHRTWRDVRTLLAAADLADDVRGLALRVFERLATAEATVHGTSPDDVHFHEVGALDAIADVTGVVAGFVHLGATAVTVSPVAVGSGSVSTAHGLLPVPPPAVAELLRGVPSYAGAATMETCTPTGAALLTTLATAYGPQPAMSVDTIGVGAGGRDPEGHPNVLRLFVGVPADAGGGPLLLECNVDDLDPRVWPAVIAALLEAGASDAWLTPILMKKGRPAHTLSALVDAGRAAGVRAAIFRQTSTIGLREQPLTKHALEREIVAVDVDGQRIAVKLARHDGAVVNAQPEYDDVARAAADLDRPVADVLAEAVARGRAFLTPGDKI.

The protein belongs to the LarC family.

The enzyme catalyses Ni(II)-pyridinium-3,5-bisthiocarboxylate mononucleotide = pyridinium-3,5-bisthiocarboxylate mononucleotide + Ni(2+). Involved in the biosynthesis of a nickel-pincer cofactor ((SCS)Ni(II) pincer complex). Binds Ni(2+), and functions in nickel delivery to pyridinium-3,5-bisthiocarboxylic acid mononucleotide (P2TMN), to form the mature cofactor. Is thus probably required for the activation of nickel-pincer cofactor-dependent enzymes. The protein is Pyridinium-3,5-bisthiocarboxylic acid mononucleotide nickel insertion protein of Nocardioides sp. (strain ATCC BAA-499 / JS614).